We begin with the raw amino-acid sequence, 458 residues long: Oxysterol-binding protein-related protein 3B (458 aa).

Disordered stretches follow at residues 47–66 (VINP…RGRW), 370–401 (DMSK…AFTP), and 431–458 (RAAA…DLST). Residues 375-396 (GYEKSSMEERQRAEKRTREEKG) show a composition bias toward basic and acidic residues. Positions 443–458 (PKSIQFNPWQFQDLST) are enriched in polar residues.

This sequence belongs to the OSBP family. Expressed in roots, leaves, stems and flowers.

Its function is as follows. May be involved in the transport of sterols. The polypeptide is Oxysterol-binding protein-related protein 3B (ORP3B) (Arabidopsis thaliana (Mouse-ear cress)).